The chain runs to 354 residues: Sulfate permease CysP (354 aa).

The next 8 helical transmembrane spans lie at 3–23, 40–60, 77–97, 125–145, 164–184, 197–217, 293–313, and 320–340; these read LAAI…GAAA, ALIL…GEVV, IVCI…LLGI, LIIV…TYFV, ILGI…GMNN, VLDV…GALL, VWIV…SLFL, and IFIM…TKAI.

This sequence belongs to the inorganic phosphate transporter (PiT) (TC 2.A.20) family.

The protein localises to the cell membrane. Functionally, involved in the import of sulfate. In Bacillus subtilis (strain 168), this protein is Sulfate permease CysP (cysP).